We begin with the raw amino-acid sequence, 165 residues long: Chorismate pyruvate-lyase (165 aa).

Residues Arg-77, Leu-115, and Glu-156 each contribute to the substrate site.

It belongs to the UbiC family. In terms of assembly, monomer.

It is found in the cytoplasm. The catalysed reaction is chorismate = 4-hydroxybenzoate + pyruvate. Its pathway is cofactor biosynthesis; ubiquinone biosynthesis. Removes the pyruvyl group from chorismate, with concomitant aromatization of the ring, to provide 4-hydroxybenzoate (4HB) for the ubiquinone pathway. The chain is Chorismate pyruvate-lyase from Salmonella typhi.